Reading from the N-terminus, the 469-residue chain is MDKKMKRTRIADALHGGLVGQEINIKGWVRTKRGNKAVNFIALNDGSTIHNMQIVADLASFDAAQMSQITTGACIGVIGTLVESQGAGQSVEVQASAIEIYGTADPATYPLQKKGHTLEFLREIAHLRPRTNTFGAIYRIRHHMAIAIHTFFHNKGYYYFHAPLITASDCEGAGQMFQVTTLNPDSLPRTEEGQVDYRKDFFGRHTSLTVSGQLEGEMAAMALGGIYTFGPTFRAENSNTPRHLAEFWMIEPEVAFLEIEDNMDLAEEFIKYCVQWALDNCMDDISFLSEHFDKELIDRLKFVLEKPFVRLAYTEGIRILEEAVKNGVKFEFPIYWGADLASEHERYLVEVHFKTPVIMTDYPKEIKSFYMKLNDDGKTVRGMDVLFPKIGEIIGGSEREADYDKLVARANEMGVPEKDIWWYLDSRRYGTAPHSGFGLGFERLLLFVTGMSNIRDVIPFPRTPNNAEF.

Belongs to the class-II aminoacyl-tRNA synthetase family. As to quaternary structure, homodimer.

It localises to the cytoplasm. It catalyses the reaction tRNA(Asn) + L-asparagine + ATP = L-asparaginyl-tRNA(Asn) + AMP + diphosphate + H(+). The sequence is that of Asparagine--tRNA ligase from Porphyromonas gingivalis (strain ATCC BAA-308 / W83).